Consider the following 422-residue polypeptide: 3-phosphoshikimate 1-carboxyvinyltransferase (422 aa).

Positions 21, 22, and 26 each coordinate 3-phosphoshikimate. Residue K21 participates in phosphoenolpyruvate binding. Residues G93 and R121 each coordinate phosphoenolpyruvate. 3-phosphoshikimate-binding residues include S166, S167, Q168, S194, D310, and K337. Q168 contacts phosphoenolpyruvate. The active-site Proton acceptor is D310. Phosphoenolpyruvate contacts are provided by R341, R382, and K407.

The protein belongs to the EPSP synthase family. As to quaternary structure, monomer.

It is found in the cytoplasm. It catalyses the reaction 3-phosphoshikimate + phosphoenolpyruvate = 5-O-(1-carboxyvinyl)-3-phosphoshikimate + phosphate. It participates in metabolic intermediate biosynthesis; chorismate biosynthesis. Catalyzes the transfer of the enolpyruvyl moiety of phosphoenolpyruvate (PEP) to the 5-hydroxyl of shikimate-3-phosphate (S3P) to produce enolpyruvyl shikimate-3-phosphate and inorganic phosphate. This is 3-phosphoshikimate 1-carboxyvinyltransferase from Methanoculleus marisnigri (strain ATCC 35101 / DSM 1498 / JR1).